The sequence spans 402 residues: 4-hydroxy-3-methylbut-2-enyl diphosphate reductase (402 aa).

Residue cysteine 66 participates in [4Fe-4S] cluster binding. A (2E)-4-hydroxy-3-methylbut-2-enyl diphosphate-binding site is contributed by histidine 96. Position 96 (histidine 96) interacts with dimethylallyl diphosphate. Residue histidine 96 participates in isopentenyl diphosphate binding. Cysteine 157 contributes to the [4Fe-4S] cluster binding site. Histidine 185 contacts (2E)-4-hydroxy-3-methylbut-2-enyl diphosphate. Histidine 185 is a binding site for dimethylallyl diphosphate. Histidine 185 provides a ligand contact to isopentenyl diphosphate. The Proton donor role is filled by glutamate 187. Threonine 250 is a (2E)-4-hydroxy-3-methylbut-2-enyl diphosphate binding site. Cysteine 288 lines the [4Fe-4S] cluster pocket. Residues serine 317, serine 318, asparagine 319, and serine 379 each contribute to the (2E)-4-hydroxy-3-methylbut-2-enyl diphosphate site. Residues serine 317, serine 318, asparagine 319, and serine 379 each coordinate dimethylallyl diphosphate. Positions 317, 318, 319, and 379 each coordinate isopentenyl diphosphate.

Belongs to the IspH family. The cofactor is [4Fe-4S] cluster.

The enzyme catalyses isopentenyl diphosphate + 2 oxidized [2Fe-2S]-[ferredoxin] + H2O = (2E)-4-hydroxy-3-methylbut-2-enyl diphosphate + 2 reduced [2Fe-2S]-[ferredoxin] + 2 H(+). It carries out the reaction dimethylallyl diphosphate + 2 oxidized [2Fe-2S]-[ferredoxin] + H2O = (2E)-4-hydroxy-3-methylbut-2-enyl diphosphate + 2 reduced [2Fe-2S]-[ferredoxin] + 2 H(+). Its pathway is isoprenoid biosynthesis; dimethylallyl diphosphate biosynthesis; dimethylallyl diphosphate from (2E)-4-hydroxy-3-methylbutenyl diphosphate: step 1/1. It functions in the pathway isoprenoid biosynthesis; isopentenyl diphosphate biosynthesis via DXP pathway; isopentenyl diphosphate from 1-deoxy-D-xylulose 5-phosphate: step 6/6. Functionally, catalyzes the conversion of 1-hydroxy-2-methyl-2-(E)-butenyl 4-diphosphate (HMBPP) into a mixture of isopentenyl diphosphate (IPP) and dimethylallyl diphosphate (DMAPP). Acts in the terminal step of the DOXP/MEP pathway for isoprenoid precursor biosynthesis. The sequence is that of 4-hydroxy-3-methylbut-2-enyl diphosphate reductase from Nostoc punctiforme (strain ATCC 29133 / PCC 73102).